The chain runs to 546 residues: Glutamate--tRNA ligase (546 aa).

The short motif at 41 to 51 (PSPTGFQHIGG) is the 'HIGH' region element. Positions 293–297 (KLSKR) match the 'KMSKS' region motif. K296 provides a ligand contact to ATP.

Belongs to the class-I aminoacyl-tRNA synthetase family. Glutamate--tRNA ligase type 1 subfamily. As to quaternary structure, monomer.

It localises to the cytoplasm. It carries out the reaction tRNA(Glu) + L-glutamate + ATP = L-glutamyl-tRNA(Glu) + AMP + diphosphate. Functionally, catalyzes the attachment of glutamate to tRNA(Glu) in a two-step reaction: glutamate is first activated by ATP to form Glu-AMP and then transferred to the acceptor end of tRNA(Glu). This is Glutamate--tRNA ligase from Clostridium perfringens (strain 13 / Type A).